The following is a 640-amino-acid chain: Chaperone protein DnaK (640 aa).

Phosphothreonine; by autocatalysis is present on threonine 196. 2 disordered regions span residues 487–526 and 593–640; these read GKEQSIKIESSSKLTDAEISKMKEDAKEHAAEDQKRKEEI and SHLY…GNDK. Over residues 501–526 the composition is skewed to basic and acidic residues; that stretch reads TDAEISKMKEDAKEHAAEDQKRKEEI. Positions 595 to 613 are enriched in polar residues; it reads LYQSQGPESSQPETAAQSD. The span at 630–640 shows a compositional bias: acidic residues; that stretch reads AEYEVIDGNDK.

This sequence belongs to the heat shock protein 70 family.

In terms of biological role, acts as a chaperone. This chain is Chaperone protein DnaK, found in Pelodictyon phaeoclathratiforme (strain DSM 5477 / BU-1).